The primary structure comprises 260 residues: Hydroxyethylthiazole kinase 1 (260 aa).

M39 lines the substrate pocket. ATP-binding residues include R115 and T160. G187 provides a ligand contact to substrate.

It belongs to the Thz kinase family. Requires Mg(2+) as cofactor.

It catalyses the reaction 5-(2-hydroxyethyl)-4-methylthiazole + ATP = 4-methyl-5-(2-phosphooxyethyl)-thiazole + ADP + H(+). It functions in the pathway cofactor biosynthesis; thiamine diphosphate biosynthesis; 4-methyl-5-(2-phosphoethyl)-thiazole from 5-(2-hydroxyethyl)-4-methylthiazole: step 1/1. Catalyzes the phosphorylation of the hydroxyl group of 4-methyl-5-beta-hydroxyethylthiazole (THZ). In Streptococcus pneumoniae serotype 19F (strain G54), this protein is Hydroxyethylthiazole kinase 1.